Reading from the N-terminus, the 430-residue chain is Enolase (430 aa).

The segment at 1 to 140 is sufficient for secretion; the sequence is MPYIVDVYAR…YQYLGGFNSK (140 aa). Thr-141 bears the Phosphothreonine mark. Residue Gln-163 coordinates (2R)-2-phosphoglycerate. Glu-205 (proton donor) is an active-site residue. Asp-242 serves as a coordination point for Mg(2+). Residue Ser-259 is modified to Phosphoserine. Position 281 is a phosphotyrosine (Tyr-281). 2 residues coordinate Mg(2+): Glu-287 and Asp-314. Residue Ser-325 is modified to Phosphoserine. 4 residues coordinate (2R)-2-phosphoglycerate: Lys-339, Arg-368, Ser-369, and Lys-390. Residue Lys-339 is the Proton acceptor of the active site.

This sequence belongs to the enolase family. Homooctamer. Component of the RNA degradosome complex composed of rny, rnjA, rnjB, pnp, pfkA and eno (although rnjA and rnjB's presence is controversial). Mg(2+) is required as a cofactor. Post-translationally, phosphorylated during sporulation.

The protein resides in the cytoplasm. The protein localises to the secreted. It localises to the cell surface. It catalyses the reaction (2R)-2-phosphoglycerate = phosphoenolpyruvate + H2O. The protein operates within carbohydrate degradation; glycolysis; pyruvate from D-glyceraldehyde 3-phosphate: step 4/5. Covalent binding to the substrate (probably 2-PG) at Lys-339 of a small fraction of enolase causes inactivation of the enzyme, and possibly serves as a signal for the export of the protein. Citrate acts as a non-competitive inhibitor for both forward and reverse reactions, probably by chelating Mg(2+). In terms of biological role, catalyzes the reversible conversion of 2-phosphoglycerate (2-PG) into phosphoenolpyruvate (PEP). It is essential for the degradation of carbohydrates via glycolysis. Its function is as follows. A component of the RNA degradosome, a multi-enzyme complex involved in RNA processing and messenger RNA degradation. The chain is Enolase from Bacillus subtilis (strain 168).